A 359-amino-acid chain; its full sequence is Glycerol-3-phosphate dehydrogenase [NAD(P)+] (359 aa).

NADPH is bound by residues Thr-11, Trp-12, Arg-32, and Lys-107. Sn-glycerol 3-phosphate-binding residues include Lys-107 and Gly-138. Position 142 (Ala-142) interacts with NADPH. The sn-glycerol 3-phosphate site is built by Lys-193, Asp-246, Ser-256, Arg-257, and Asn-258. The active-site Proton acceptor is Lys-193. An NADPH-binding site is contributed by Arg-257. Positions 281 and 283 each coordinate NADPH.

Belongs to the NAD-dependent glycerol-3-phosphate dehydrogenase family.

It localises to the cytoplasm. The catalysed reaction is sn-glycerol 3-phosphate + NAD(+) = dihydroxyacetone phosphate + NADH + H(+). It carries out the reaction sn-glycerol 3-phosphate + NADP(+) = dihydroxyacetone phosphate + NADPH + H(+). Its pathway is membrane lipid metabolism; glycerophospholipid metabolism. Its function is as follows. Catalyzes the reduction of the glycolytic intermediate dihydroxyacetone phosphate (DHAP) to sn-glycerol 3-phosphate (G3P), the key precursor for phospholipid synthesis. The polypeptide is Glycerol-3-phosphate dehydrogenase [NAD(P)+] (Dehalococcoides mccartyi (strain ATCC BAA-2266 / KCTC 15142 / 195) (Dehalococcoides ethenogenes (strain 195))).